A 402-amino-acid chain; its full sequence is MLEKNLLPEILLAIHMPLNKGLTRVKAIVIIIVVIIAVIAGVVGYYLINHPSNSVTTSSSSTTTSSSLSSTSISSSTTNITSSQGITVFVAGAYLAILNYLADQFQNATEIPVHVVGSGSFALASQIASQTPVPANVFIPVAYIQAVELTGSRNPGWAIAFLSDQMTIVYSNYTTKSPYWSQLYSNYTMAMETNNTKYWYNFFYLLTTRFSLGIANPNTDPEGLYAYLILQMASYLYANHNISYFVHLVKANPNVKVAPSTANYVAPLKAGTLDFTFSYVSYAVSQGLEYLKLPPWLSFGYYPNETTWYSQFAYNISVNGQTLTIHGNPVYLYITIPLNASNIQTAYQFIGFVLGHESQLTRFNVIPIQPALLYNETSNIPQPILNLLKSGELKYAGNFSEV.

Positions 1–44 (MLEKNLLPEILLAIHMPLNKGLTRVKAIVIIIVVIIAVIAGVVG) are cleaved as a signal peptide. Positions 53–79 (NSVTTSSSSTTTSSSLSSTSISSSTTN) are disordered.

This sequence belongs to the bacterial solute-binding protein 1 family. WtpA subfamily.

This is an uncharacterized protein from Saccharolobus solfataricus (strain ATCC 35092 / DSM 1617 / JCM 11322 / P2) (Sulfolobus solfataricus).